Reading from the N-terminus, the 169-residue chain is Signal peptidase complex subunit 1 (169 aa).

Over 1–93 (MARGGDTGCT…QKLAEQMFQG (93 aa)) the chain is Cytoplasmic. Residues 91-169 (FQGIILFSAI…RKIKRHAKNN (79 aa)) form a (Microbial infection) Interaction with JEV NS2B region. Residues 94-114 (IILFSAIVGFIYGYVAEQFGW) form a helical membrane-spanning segment. Positions 110-169 (EQFGWTVYIVMAGFAFSCLLTLPPWPIYRRHPLKWLPVQESSTDDKKPGERKIKRHAKNN) are (Microbial infection) Interaction with HCV NS2 and HCV E2. Residue T115 is a topological domain, lumenal. A helical membrane pass occupies residues 116–136 (VYIVMAGFAFSCLLTLPPWPI). The Cytoplasmic segment spans residues 137–169 (YRRHPLKWLPVQESSTDDKKPGERKIKRHAKNN). The interval 148 to 169 (QESSTDDKKPGERKIKRHAKNN) is disordered.

Belongs to the SPCS1 family. In terms of assembly, component of the signal peptidase complex paralog A (SPC-A) composed of a catalytic subunit SEC11A and three accessory subunits SPCS1, SPCS2 and SPCS3. Component of the signal peptidase complex paralog C (SPC-C) composed of a catalytic subunit SEC11C and three accessory subunits SPCS1, SPCS2 and SPCS3. Within the complex, interacts with SPCS2 and SPCS3. The complex induces a local thinning of the ER membrane which is used to measure the length of the signal peptide (SP) h-region of protein substrates. This ensures the selectivity of the complex towards h-regions shorter than 18-20 amino acids. As to quaternary structure, (Microbial infection) Interacts with hepatitis C virus (HCV) proteins NS2 and E2. Interacts with NS2B from Japanese encephalitis virus (JEV), West Nile virus (WNV), and Zika virus (ZIKV). May be phosphorylated.

The protein localises to the endoplasmic reticulum membrane. Component of the signal peptidase complex (SPC) which catalyzes the cleavage of N-terminal signal sequences from nascent proteins as they are translocated into the lumen of the endoplasmic reticulum. Dispensable for SPC enzymatic activity. Its function is as follows. (Microbial infection) Required for the post-translational processing of proteins involved in virion assembly and secretion from flaviviruses such as West Nile virus (WNV), Japanese encephalitis virus (JEV), Dengue virus type 2 (DENV-2), Yellow Fever virus (YFV), Zika virus (ZIKV) and hepatitis C virus (HCV). Plays a key role in the post-translational processing of flaviviral structural proteins prM, E, and NS1. In HCV, it is involved in virion assembly where it promotes the interaction between HCV virus proteins NS2 and E2. This chain is Signal peptidase complex subunit 1 (SPCS1), found in Homo sapiens (Human).